The following is a 109-amino-acid chain: Nucleoid-associated protein Psyc_0793 (109 aa).

It belongs to the YbaB/EbfC family. Homodimer.

Its subcellular location is the cytoplasm. The protein localises to the nucleoid. Functionally, binds to DNA and alters its conformation. May be involved in regulation of gene expression, nucleoid organization and DNA protection. The chain is Nucleoid-associated protein Psyc_0793 from Psychrobacter arcticus (strain DSM 17307 / VKM B-2377 / 273-4).